The following is a 202-amino-acid chain: MEKKFYELPELPYPYDALEPYISEEQLRIHHEKHHQAYVDGANGVLRKLDDARENGEEVDIKAALKELSFHVGGYVLHLFFWGNMGPADECGGEPDGRLAEYIEKDFGSFQRFKKEFSQAAVSAEGSGWAVLTYCQRTDRLFIMQVEKHNVNVIPHFRILMVLDVWEHAYYIDYRNVRPDYVEAFWNIVNWKEVEKRFDDLF.

Fe cation is bound by residues His30, His78, Asp164, and His168.

This sequence belongs to the iron/manganese superoxide dismutase family. Homotetramer. Requires Fe cation as cofactor.

The enzyme catalyses 2 superoxide + 2 H(+) = H2O2 + O2. Its function is as follows. Destroys superoxide anion radicals which are normally produced within the cells and which are toxic to biological systems. This is Superoxide dismutase [Fe] (sod) from Methanothermobacter marburgensis (strain ATCC BAA-927 / DSM 2133 / JCM 14651 / NBRC 100331 / OCM 82 / Marburg) (Methanobacterium thermoautotrophicum).